The following is a 313-amino-acid chain: MLDKVLKIATRQSPLALWQAQYVKARLEQAHPGLNVELVPMVTRGDVILDTPLAKVGGKGLFVKELELAMLEGRADIAVHSMKDVPVEFPEGLGLVTICERDDPRDAFVSNHYASIDELPAGSVVGTSSLRRQCQLAATRPDLVIRSLRGNVGTRLSKLDNGEYDAIILAAAGLKRLKLEARIRQPLSPEQSLPAVGQGAVGIECRLDDAWTQALLAPLNHAETAVRVRAERAMNTRLEGGCQVPIGSYAELVNGELWLRALVGAPDGSQMVRGERRGPAEQAEALGISLAEELLDNGARDILAAVYDGEAPR.

An S-(dipyrrolylmethanemethyl)cysteine modification is found at Cys-242.

Belongs to the HMBS family. Monomer. Dipyrromethane is required as a cofactor.

The enzyme catalyses 4 porphobilinogen + H2O = hydroxymethylbilane + 4 NH4(+). It functions in the pathway porphyrin-containing compound metabolism; protoporphyrin-IX biosynthesis; coproporphyrinogen-III from 5-aminolevulinate: step 2/4. In terms of biological role, tetrapolymerization of the monopyrrole PBG into the hydroxymethylbilane pre-uroporphyrinogen in several discrete steps. In Klebsiella pneumoniae (strain 342), this protein is Porphobilinogen deaminase.